Consider the following 756-residue polypeptide: Protein psiP (756 aa).

The first 23 residues, 1–23 (MFIQRTFLKVLTLLSIVTVLVHG), serve as a signal peptide directing secretion. Over 24 to 692 (QTQPKDKITL…NCNTGAVVST (669 aa)) the chain is Extracellular. An N-linked (GlcNAc...) asparagine glycan is attached at asparagine 82. In terms of domain architecture, PA14 spans 126–281 (LNWNGEAYEY…VDYCGVCEGD (156 aa)). 4 N-linked (GlcNAc...) asparagine glycosylation sites follow: asparagine 359, asparagine 483, asparagine 564, and asparagine 663. Residues 693-713 (AVIAGSTVAGAVALGIFLYGG) traverse the membrane as a helical segment. At 714 to 756 (KKGYDYWKDSRNISMGSSNSNPLYEEQQTGRGVNPMYDDPAAN) the chain is on the cytoplasmic side. The span at 730 to 744 (SSNSNPLYEEQQTGR) shows a compositional bias: polar residues. A disordered region spans residues 730–756 (SSNSNPLYEEQQTGRGVNPMYDDPAAN).

This sequence belongs to the prespore-cell-inducing factor family.

It is found in the membrane. The polypeptide is Protein psiP (psiP) (Dictyostelium discoideum (Social amoeba)).